The primary structure comprises 205 residues: Small ribosomal subunit protein uS4 (205 aa).

In terms of domain architecture, S4 RNA-binding spans 94-157 (SRLDTVVYRM…KQIPLIQESV (64 aa)).

It belongs to the universal ribosomal protein uS4 family. In terms of assembly, part of the 30S ribosomal subunit. Contacts protein S5. The interaction surface between S4 and S5 is involved in control of translational fidelity.

Functionally, one of the primary rRNA binding proteins, it binds directly to 16S rRNA where it nucleates assembly of the body of the 30S subunit. Its function is as follows. With S5 and S12 plays an important role in translational accuracy. The sequence is that of Small ribosomal subunit protein uS4 from Rickettsia felis (strain ATCC VR-1525 / URRWXCal2) (Rickettsia azadi).